We begin with the raw amino-acid sequence, 194 residues long: SRP-independent targeting protein 3 homolog (194 aa).

Helical transmembrane passes span 43 to 63 and 110 to 130; these read ILYA…KIII and LVTI…PPLL.

The protein belongs to the PHO88 family.

Its subcellular location is the endoplasmic reticulum membrane. Functionally, may function in a SRP (signal recognition particle) and GET (guided entry of tail-anchored proteins) independent pathway for targeting a broad range of substrate proteins to the endoplasmic reticulum. Involved in inorganic phosphate uptake. Also involved in telomere length regulation and maintenance. The sequence is that of SRP-independent targeting protein 3 homolog from Schizosaccharomyces pombe (strain 972 / ATCC 24843) (Fission yeast).